The primary structure comprises 141 residues: Meiotically up-regulated gene 118 protein (141 aa).

Polar residues predominate over residues 106–115 (LSSQKSARQP). Positions 106–141 (LSSQKSARQPTKTVASSSSSSSKSTTVSKSSSKSQV) are disordered. The span at 116–141 (TKTVASSSSSSSKSTTVSKSSSKSQV) shows a compositional bias: low complexity.

The protein resides in the nucleus. Functionally, has a role in meiosis. The sequence is that of Meiotically up-regulated gene 118 protein (mug118) from Schizosaccharomyces pombe (strain 972 / ATCC 24843) (Fission yeast).